Consider the following 556-residue polypeptide: Peptidylarginine deiminase (556 aa).

An N-terminal signal peptide occupies residues 1–23; sequence MKKLLQAKALILALGLFQLPAIA. A propeptide spanning residues 24-43 is cleaved from the precursor; sequence QTQMQADRTNGQFATEEMQR. Cys-351 (amidino-cysteine intermediate) is an active-site residue.

The protein belongs to the agmatine deiminase family. It depends on FAD as a cofactor. The cofactor is FMN.

It is found in the secreted. With respect to regulation, inhibited by cysteine and TLCK. Inhibited by high concentration of thiourea and thio-L-citrulline. In terms of biological role, deiminates the guanidino group of C-terminal arginine residues on a variety of peptides, including the vasoregulatory peptide-hormone bradykinin, to yield ammonia and a citrulline residue. May promote the growth of the pathogen in the periodontal pocket by producing ammonia, ammonia having a protective effect during acidic cleaning cycles in the mouth. The polypeptide is Peptidylarginine deiminase (Porphyromonas gingivalis (strain ATCC BAA-308 / W83)).